A 156-amino-acid polypeptide reads, in one-letter code: Cell division protein SepF (156 aa).

The tract at residues 17-44 (PETADYYEDQQPAQQAPAPVPTPAPTRS) is disordered.

The protein belongs to the SepF family. As to quaternary structure, homodimer. Interacts with FtsZ.

It is found in the cytoplasm. Cell division protein that is part of the divisome complex and is recruited early to the Z-ring. Probably stimulates Z-ring formation, perhaps through the cross-linking of FtsZ protofilaments. Its function overlaps with FtsA. The protein is Cell division protein SepF of Limosilactobacillus fermentum (strain NBRC 3956 / LMG 18251) (Lactobacillus fermentum).